Consider the following 330-residue polypeptide: Type II restriction enzyme Cfr9I (330 aa).

This sequence belongs to the XcyI type II restriction endonuclease family. Mg(2+) serves as cofactor.

It carries out the reaction Endonucleolytic cleavage of DNA to give specific double-stranded fragments with terminal 5'-phosphates.. Its function is as follows. An E and P subtype restriction enzyme that recognizes the double-stranded sequence 5'-CCCGGG-3' and cleaves after C-1. The protein is Type II restriction enzyme Cfr9I (cfr9IR) of Citrobacter freundii.